The following is a 526-amino-acid chain: Flavonoid 3'-monooxygenase CYP75B3 (526 aa).

A helical transmembrane segment spans residues 6–26 (LPLLLGSLAVSAAVWYLVYFL). Residue Cys-461 coordinates heme.

Belongs to the cytochrome P450 family. Heme serves as cofactor.

It localises to the membrane. The enzyme catalyses a 3'-unsubstituted flavone + reduced [NADPH--hemoprotein reductase] + O2 = a 3'-hydroxyflavone + oxidized [NADPH--hemoprotein reductase] + H2O + H(+). It functions in the pathway secondary metabolite biosynthesis; flavonoid biosynthesis. Catalyzes the 3'-hydroxylation of the flavonoid B-ring to the 3',4'-hydroxylated state. Catalyzes the 3'-hydroxylation of apigenin to generate luteolin. This Oryza sativa subsp. japonica (Rice) protein is Flavonoid 3'-monooxygenase CYP75B3.